The chain runs to 249 residues: 3-deoxy-manno-octulosonate cytidylyltransferase (249 aa).

This sequence belongs to the KdsB family.

It localises to the cytoplasm. The catalysed reaction is 3-deoxy-alpha-D-manno-oct-2-ulosonate + CTP = CMP-3-deoxy-beta-D-manno-octulosonate + diphosphate. Its pathway is nucleotide-sugar biosynthesis; CMP-3-deoxy-D-manno-octulosonate biosynthesis; CMP-3-deoxy-D-manno-octulosonate from 3-deoxy-D-manno-octulosonate and CTP: step 1/1. It participates in bacterial outer membrane biogenesis; lipopolysaccharide biosynthesis. Activates KDO (a required 8-carbon sugar) for incorporation into bacterial lipopolysaccharide in Gram-negative bacteria. The polypeptide is 3-deoxy-manno-octulosonate cytidylyltransferase (Oleidesulfovibrio alaskensis (strain ATCC BAA-1058 / DSM 17464 / G20) (Desulfovibrio alaskensis)).